Consider the following 54-residue polypeptide: Movement protein p6 (54 aa).

The Lumenal segment spans residues 1-10; the sequence is MDCVLRSYLL. The helical transmembrane segment at 11 to 31 threads the bilayer; sequence LAFGFLICLFLFCLVVFIWFV. Residues 32 to 54 lie on the Cytoplasmic side of the membrane; it reads YKQILFRTTAQSNEARHNHSTVV.

As to quaternary structure, homodimer; disulfide-linked.

The protein localises to the host rough endoplasmic reticulum membrane. Functionally, transports viral genome to neighboring plant cells directly through plasmosdesmata, without any budding. The movement protein allows efficient cell to cell propagation, by bypassing the host cell wall barrier. Two movement proteins, p6, Hsp70h and three structural proteins, CP, CPm, and P64 are essential for cell-cell movement. Also plays a role in virion formation. Together with CPm and p64, encapsidates the 5'-terminal portion of the viral genome. The chain is Movement protein p6 from Beet yellows virus (isolate Ukraine) (BYV).